A 586-amino-acid polypeptide reads, in one-letter code: DNA-directed RNA polymerase subunit beta' (586 aa).

Residues Cys-64, Cys-66, Cys-85, and Cys-88 each coordinate Zn(2+). Mg(2+)-binding residues include Asp-448, Asp-450, and Asp-452.

It belongs to the RNA polymerase beta' chain family. RpoC1 subfamily. In plastids the minimal PEP RNA polymerase catalytic core is composed of four subunits: alpha, beta, beta', and beta''. When a (nuclear-encoded) sigma factor is associated with the core the holoenzyme is formed, which can initiate transcription. The cofactor is Mg(2+). Zn(2+) is required as a cofactor.

It localises to the plastid. The protein resides in the chloroplast. It catalyses the reaction RNA(n) + a ribonucleoside 5'-triphosphate = RNA(n+1) + diphosphate. DNA-dependent RNA polymerase catalyzes the transcription of DNA into RNA using the four ribonucleoside triphosphates as substrates. The sequence is that of DNA-directed RNA polymerase subunit beta' from Euglena gracilis.